The following is a 232-amino-acid chain: MTETRGARATEAFFGRRKGKPLRERQAAHLEHLLPLLKLDLEEPAPADLTALFPEPVERIRLEIGFGGGEHLIHRAAEDPATGFIGVEPFVNSMAKLLGQIEAKAIRNIRLYDDDATQVLDWLPAASVDQIDLLYPDPWPKRKHWKRRFVSQINLDRFARILKPGGLFCFASDIDSYINWTLIHCREHAAFEWTAERAADWLTPFAGWPSTRYEAKARREGRSSAYLAFRRA.

S-adenosyl-L-methionine is bound by residues Glu63, Glu88, Asp115, and Asp137. Asp137 is a catalytic residue. Substrate is bound by residues Lys141, Asp173, and 211–214; that span reads TRYE.

This sequence belongs to the class I-like SAM-binding methyltransferase superfamily. TrmB family.

It catalyses the reaction guanosine(46) in tRNA + S-adenosyl-L-methionine = N(7)-methylguanosine(46) in tRNA + S-adenosyl-L-homocysteine. Its pathway is tRNA modification; N(7)-methylguanine-tRNA biosynthesis. Functionally, catalyzes the formation of N(7)-methylguanine at position 46 (m7G46) in tRNA. The polypeptide is tRNA (guanine-N(7)-)-methyltransferase (Rhizobium meliloti (strain 1021) (Ensifer meliloti)).